We begin with the raw amino-acid sequence, 343 residues long: MNIHRSTPITIARYGRSRNKTQDFEELSSIRSAEPSQSFSPNLGSPSPPETPNLSHCVSCIGKYLLLEPLEGDHVFRAVHLHSGEELVCKVFDISCYQESLAPCFCLSAHSNINQITEIILGETKAYVFFERSYGDMHSFVRTCKKLREEEAARLFYQIASAVAHCHDGGLVLRDLKLRKFIFKDEERTRVKLESLEDAYILRGDDDSLSDKHGCPAYVSPEILNTNGSYSGKAADVWSLGVMLYTMLVGRYPFHDIEPSSLFSKIRRGQFNIPETLSPKAKCLIRSILRREPSERLTSQEILDHPWFSTDFSVSNSGYGAKEVSDQLVPDVNMEETLDPFFN.

Residues 25–50 form a disordered region; it reads EELSSIRSAEPSQSFSPNLGSPSPPE. Polar residues predominate over residues 29-45; the sequence is SIRSAEPSQSFSPNLGS. The Protein kinase domain occupies 61 to 308; that stretch reads IGKYLLLEPL…SQEILDHPWF (248 aa).

The protein belongs to the protein kinase superfamily. CAMK Ser/Thr protein kinase family. Tribbles subfamily. In terms of tissue distribution, expressed in granulosa cells of the dominant follicles of the ovary and down-regulated in ovulatory follicles.

It is found in the cytoplasm. The protein resides in the cytoskeleton. In terms of biological role, interacts with MAPK kinases and regulates activation of MAP kinases. Does not display kinase activity. The chain is Tribbles homolog 2 from Bos taurus (Bovine).